The sequence spans 425 residues: MATIYACRGFHRVPVKLSPSSTLQEVILSSYKQLGFSDWHNLELLHGDKKVDTSLLLRLSGIINGAKLIVKESATNQSGKSSSSISPQSKKIKVALQLPGAARIIDEASSETSIKQLLERHSLLTKVSHVLINGRNFKSEEFDNPLLLYGIREGSILIRLFPIKAQQSIVSEQAPVSQTFNGDVKEKKNADLMDIESENKKDDIVESFPKYPVDAHKLLEPLPTPIPSLPSTPSSYQNLPSQSLTGESLPTVSNQEKDEGVIEKVAVNNTPSVSSKSPFPKKKSFSSMLAQVKKEKAENNGSDGYDLQPTKSQLELYQSILRKRANQVSSTSLTKSSSPKPLPSSAIVKFDFGNGKSIVHEFSKDDNIETLRAFVASHLSPEESTSFQLTFSNYEALPTTGLIVEHIGRAVVRVHTISDPVYAQR.

The segment at 224 to 257 is disordered; it reads TPIPSLPSTPSSYQNLPSQSLTGESLPTVSNQEK. The span at 236–254 shows a compositional bias: polar residues; that stretch reads YQNLPSQSLTGESLPTVSN. Ser-338 carries the post-translational modification Phosphoserine. Residues 341–390 form the UBX domain; sequence PLPSSAIVKFDFGNGKSIVHEFSKDDNIETLRAFVASHLSPEESTSFQLT.

It is found in the cytoplasm. The protein localises to the nucleus. In terms of biological role, involved in CDC48-dependent protein degradation through the ubiquitin/proteasome pathway. This is UBX domain-containing protein 4 (ubx4) from Schizosaccharomyces pombe (strain 972 / ATCC 24843) (Fission yeast).